The chain runs to 319 residues: ATP-dependent 6-phosphofructokinase (319 aa).

Gly11 is an ATP binding site. 21–25 contributes to the ADP binding site; it reads RAVVR. Residues 72 to 73 and 102 to 105 each bind ATP; these read RC and GDGS. Asp103 is a Mg(2+) binding site. 125–127 is a substrate binding site; the sequence is TID. Catalysis depends on Asp127, which acts as the Proton acceptor. Arg154 lines the ADP pocket. Residues Arg162 and 169–171 each bind substrate; that span reads MGR. ADP is bound by residues 185–187, Arg211, and 213–215; these read GAE and KKH. Substrate-binding positions include Glu222, Arg243, and 249–252; that span reads HIQR.

Belongs to the phosphofructokinase type A (PFKA) family. ATP-dependent PFK group I subfamily. Prokaryotic clade 'B1' sub-subfamily. In terms of assembly, homotetramer. Mg(2+) serves as cofactor.

It localises to the cytoplasm. The enzyme catalyses beta-D-fructose 6-phosphate + ATP = beta-D-fructose 1,6-bisphosphate + ADP + H(+). The protein operates within carbohydrate degradation; glycolysis; D-glyceraldehyde 3-phosphate and glycerone phosphate from D-glucose: step 3/4. Its activity is regulated as follows. Allosterically activated by ADP and other diphosphonucleosides, and allosterically inhibited by phosphoenolpyruvate. Functionally, catalyzes the phosphorylation of D-fructose 6-phosphate to fructose 1,6-bisphosphate by ATP, the first committing step of glycolysis. The chain is ATP-dependent 6-phosphofructokinase from Bacillus velezensis (strain DSM 23117 / BGSC 10A6 / LMG 26770 / FZB42) (Bacillus amyloliquefaciens subsp. plantarum).